We begin with the raw amino-acid sequence, 947 residues long: Regulator of spindle assembly protein 2 (947 aa).

2 disordered regions span residues 20 to 148 and 173 to 211; these read EKPA…LSEQ and SPHE…LKPR. Composition is skewed to basic and acidic residues over residues 30–50 and 62–84; these read PKYR…EGEK and TRED…DLRI. 2 stretches are compositionally biased toward polar residues: residues 90–102 and 179–188; these read SATP…SDQY and QQTIQESSEQ. Residues 276–320 adopt a coiled-coil conformation; that stretch reads IIAEEAKKRRNEAEAVRKLIEVETQNAKKRAVIQELKDRIDKLTQ. Disordered stretches follow at residues 407–453, 575–594, 600–662, and 681–705; these read KINP…RRIG, ERES…LEIP, SVTT…GLII, and EQSL…FLLD. The span at 411 to 422 shows a compositional bias: low complexity; it reads SSQLNQQSSSDA. A compositionally biased stretch (polar residues) spans 430 to 449; sequence EASTQMTSRLAESAMTQTSP. Residues 563-591 are a coiled coil; sequence AGLSHYLEQVKKERESMEAQESESESMEL. Acidic residues predominate over residues 580–590; the sequence is EAQESESESME. A compositionally biased stretch (basic and acidic residues) spans 645–657; sequence FEHEIEEHKEPEK.

In terms of assembly, interacts with phosphatase regulatory subunit rsa-1 and tpxl-1. May interact with spd-5. May interact with sys-1.

The protein localises to the cytoplasm. It is found in the cytoskeleton. Its subcellular location is the microtubule organizing center. It localises to the centrosome. Recruits rsa-1 and, thereby, phosphatase let-92/paa-1 complex to the centrosomes. Recruits sys-1/beta-catenin to mitotic centrosomes during the first embryonic cell divisions. This chain is Regulator of spindle assembly protein 2, found in Caenorhabditis elegans.